The primary structure comprises 424 residues: Adenylosuccinate synthetase 1 (424 aa).

Residues 12-18 (GDEGKGK) and 40-42 (GHT) each bind GTP. Residue Asp13 is the Proton acceptor of the active site. Residues Asp13 and Gly40 each contribute to the Mg(2+) site. Residues 13–16 (DEGK), 38–41 (NAGH), Thr127, Arg141, Thr236, and Arg304 contribute to the IMP site. Catalysis depends on His41, which acts as the Proton donor. 300 to 306 (ARTGRPR) is a substrate binding site. Residues Arg306, 332–334 (KLD), and 413–415 (GVG) each bind GTP.

This sequence belongs to the adenylosuccinate synthetase family. As to quaternary structure, homodimer. Requires Mg(2+) as cofactor.

It localises to the cytoplasm. It catalyses the reaction IMP + L-aspartate + GTP = N(6)-(1,2-dicarboxyethyl)-AMP + GDP + phosphate + 2 H(+). Its pathway is purine metabolism; AMP biosynthesis via de novo pathway; AMP from IMP: step 1/2. In terms of biological role, plays an important role in the de novo pathway of purine nucleotide biosynthesis. Catalyzes the first committed step in the biosynthesis of AMP from IMP. The chain is Adenylosuccinate synthetase 1 from Methanosarcina acetivorans (strain ATCC 35395 / DSM 2834 / JCM 12185 / C2A).